Consider the following 914-residue polypeptide: TRPM8 channel-associated factor 2 (914 aa).

The region spanning 541-840 (DAWMSTGLNL…TYLQLQEAFG (300 aa)) is the Peptidase M60 domain.

This sequence belongs to the TCAF family. Interacts with TRPM8 (via N-terminus and C-terminus domains); the interaction inhibits TRPM8 channel activity. Interacts with TRPV6.

The protein resides in the cell membrane. Negatively regulates the plasma membrane cation channel TRPM8 activity. Involved in the recruitment of TRPM8 to the cell surface. Promotes prostate cancer cell migration stimulation in a TRPM8-dependent manner. The chain is TRPM8 channel-associated factor 2 from Bos taurus (Bovine).